A 198-amino-acid polypeptide reads, in one-letter code: Probable molybdenum cofactor guanylyltransferase (198 aa).

GTP is bound by residues 9 to 11, Lys22, Asp66, and Asp95; that span reads LAG. Asp95 contacts Mg(2+).

The protein belongs to the MobA family. The cofactor is Mg(2+).

It localises to the cytoplasm. The enzyme catalyses Mo-molybdopterin + GTP + H(+) = Mo-molybdopterin guanine dinucleotide + diphosphate. Functionally, transfers a GMP moiety from GTP to Mo-molybdopterin (Mo-MPT) cofactor (Moco or molybdenum cofactor) to form Mo-molybdopterin guanine dinucleotide (Mo-MGD) cofactor. This chain is Probable molybdenum cofactor guanylyltransferase, found in Clostridium perfringens (strain SM101 / Type A).